Reading from the N-terminus, the 208-residue chain is Proheparin-binding EGF-like growth factor (208 aa).

Residues 1 to 19 (MKLLPSVVLKLFLAAVLSA) form the signal peptide. A propeptide spans 20–62 (LVTGESLERLRRGLAAGTSNPDPPTVSTDQLLPLGGGRDRKVR) (or 72, or 73, or 76, or 81). The Extracellular portion of the chain corresponds to 20–160 (LVTGESLERL…ENRLYTYDHT (141 aa)). The interval 33–56 (LAAGTSNPDPPTVSTDQLLPLGGG) is disordered. Over residues 36–49 (GTSNPDPPTVSTDQ) the composition is skewed to polar residues. T37 carries O-linked (GalNAc...) threonine glycosylation. Residue S38 is glycosylated (O-linked (GalNAc...) serine). O-linked (GalNAc...) threonine glycans are attached at residues T44, T47, T75, and T85. The segment at 82 to 104 (ALATPNKEEHGKRKKKGKGLGKK) is disordered. Basic residues predominate over residues 93 to 102 (KRKKKGKGLG). Residues 104–144 (KRDPCLRKYKDFCIHGECKYVKELRAPSCICHPGYHGERCH) enclose the EGF-like domain. Disulfide bonds link C108/C121, C116/C132, and C134/C143. A propeptide spans 149 to 208 (PVENRLYTYDHTTILAVVAVVLSSVCLLVIVGLLMFRYHRRGGYDVENEEKVKLGMTNSH) (C-terminal). A helical transmembrane segment spans residues 161 to 184 (TILAVVAVVLSSVCLLVIVGLLMF). The Cytoplasmic segment spans residues 185–208 (RYHRRGGYDVENEEKVKLGMTNSH).

In terms of assembly, interacts with FBLN1. Interacts with EGFR and ERBB4. In terms of processing, several N-termini have been identified by direct sequencing. The forms with N-termini 63, 73 and 74 have been tested and found to be biologically active. Post-translationally, O-glycosylated with core 1 or possibly core 8 glycans. Thr-47 is a minor glycosylation site compared to Thr-44.

The protein localises to the secreted. It is found in the extracellular space. The protein resides in the cell membrane. Its function is as follows. Growth factor that mediates its effects via EGFR, ERBB2 and ERBB4. Required for normal cardiac valve formation and normal heart function. Promotes smooth muscle cell proliferation. May be involved in macrophage-mediated cellular proliferation. It is mitogenic for fibroblasts, but not endothelial cells. It is able to bind EGF receptor/EGFR with higher affinity than EGF itself and is a far more potent mitogen for smooth muscle cells than EGF. Also acts as a diphtheria toxin receptor. The chain is Proheparin-binding EGF-like growth factor (HBEGF) from Homo sapiens (Human).